The sequence spans 88 residues: Small ribosomal subunit protein bS20 (88 aa).

The tract at residues 1–26 is disordered; that stretch reads MANTAQARKRARQNTKRRQNSASQRS. Basic residues predominate over residues 7 to 19; the sequence is ARKRARQNTKRRQ.

It belongs to the bacterial ribosomal protein bS20 family.

Functionally, binds directly to 16S ribosomal RNA. This is Small ribosomal subunit protein bS20 from Psychrobacter arcticus (strain DSM 17307 / VKM B-2377 / 273-4).